The primary structure comprises 341 residues: Phosphoribosylformylglycinamidine cyclo-ligase (341 aa).

This sequence belongs to the AIR synthase family.

It localises to the cytoplasm. The enzyme catalyses 2-formamido-N(1)-(5-O-phospho-beta-D-ribosyl)acetamidine + ATP = 5-amino-1-(5-phospho-beta-D-ribosyl)imidazole + ADP + phosphate + H(+). The protein operates within purine metabolism; IMP biosynthesis via de novo pathway; 5-amino-1-(5-phospho-D-ribosyl)imidazole from N(2)-formyl-N(1)-(5-phospho-D-ribosyl)glycinamide: step 2/2. The protein is Phosphoribosylformylglycinamidine cyclo-ligase of Alkaliphilus oremlandii (strain OhILAs) (Clostridium oremlandii (strain OhILAs)).